Here is a 351-residue protein sequence, read N- to C-terminus: Histidinol-phosphate aminotransferase (351 aa).

The residue at position 221 (K221) is an N6-(pyridoxal phosphate)lysine.

Belongs to the class-II pyridoxal-phosphate-dependent aminotransferase family. Histidinol-phosphate aminotransferase subfamily. Homodimer. The cofactor is pyridoxal 5'-phosphate.

The catalysed reaction is L-histidinol phosphate + 2-oxoglutarate = 3-(imidazol-4-yl)-2-oxopropyl phosphate + L-glutamate. Its pathway is amino-acid biosynthesis; L-histidine biosynthesis; L-histidine from 5-phospho-alpha-D-ribose 1-diphosphate: step 7/9. The protein is Histidinol-phosphate aminotransferase of Staphylococcus epidermidis (strain ATCC 35984 / DSM 28319 / BCRC 17069 / CCUG 31568 / BM 3577 / RP62A).